The chain runs to 1178 residues: Integrin alpha-2 (1178 aa).

Positions 1–26 (MGPGQAGGALLLRLLMLVQGILNCLA) are cleaved as a signal peptide. Residues 27-1129 (YNVGLPGAKI…KPTEKAEVPT (1103 aa)) are Extracellular-facing. FG-GAP repeat units follow at residues 31–89 (LPGA…TATC) and 98–158 (ASIS…FLTS). C80 and C89 are disulfide-bonded. N-linked (GlcNAc...) asparagine glycans are attached at residues N102 and N109. A VWFA domain is found at 185-362 (WEAVKNFLVK…TLGEQIFSIE (178 aa)). 5 FG-GAP repeats span residues 363–417 (GTVQ…VIFP), 420–472 (AFDQ…KQGN), 474–536 (TVIQ…ILNQ), 537–595 (HQFL…TIRT), and 601–661 (ILGS…FTPD). 3 N-linked (GlcNAc...) asparagine glycosylation sites follow: N429, N457, and N472. A Cell attachment site motif is present at residues 480–482 (RGD). Ca(2+)-binding residues include D496, D498, D500, D504, D560, N562, D564, D568, D624, N626, D628, and D632. 5 cysteine pairs are disulfide-bonded: C677–C734, C786–C792, C862–C873, C1016–C1047, and C1052–C1057. The N-linked (GlcNAc...) asparagine glycan is linked to N696. N-linked (GlcNAc...) asparagine glycans are attached at residues N1054, N1071, and N1078. A helical membrane pass occupies residues 1130 to 1151 (GVIIGSIIAGILLLLAMTAGLW). The Cytoplasmic portion of the chain corresponds to 1152 to 1178 (KLGFFKRQYKKMGQNPDEMDETTELNS). The GFFKR motif motif lies at 1154–1158 (GFFKR).

The protein belongs to the integrin alpha chain family. Heterodimer of an alpha and a beta subunit. Alpha-2 associates with beta-1. Interacts with HPS5 and RAB21.

It is found in the membrane. In terms of biological role, integrin alpha-2/beta-1 is a collagen receptor, being responsible for adhesion of platelets and other cells to collagens, modulation of collagen and collagenase gene expression, force generation and organization of newly synthesized extracellular matrix. It is also a receptor for laminins, collagen C-propeptides and E-cadherin. Mice homozygous for a null mutation in the alpha-2 die very early in embryogenesis. The chain is Integrin alpha-2 (Itga2) from Mus musculus (Mouse).